The following is a 579-amino-acid chain: Threonylcarbamoyladenosine tRNA methylthiotransferase (579 aa).

Ser-53 is subject to Phosphoserine. The MTTase N-terminal domain occupies 64–172 (QKIWIRTWGC…VVEVVEETIK (109 aa)). The [4Fe-4S] cluster site is built by Cys-73 and Cys-109. Residue Ser-122 is modified to Phosphoserine. Positions 138, 214, 218, and 221 each coordinate [4Fe-4S] cluster. Residues 200–431 (RKNPLIEIIS…RVFHSYSPYD (232 aa)) enclose the Radical SAM core domain. One can recognise a TRAM domain in the interval 431–493 (DHKIGERQQV…KHFMKGQPVS (63 aa)). Position 499 is a phosphothreonine (Thr-499). Residues 556–578 (CALRMSVGLALLGLLFAFFVKVY) traverse the membrane as a helical segment.

This sequence belongs to the methylthiotransferase family. CDKAL1 subfamily. Requires [4Fe-4S] cluster as cofactor. Expressed in pancreatic islets.

It is found in the endoplasmic reticulum membrane. It carries out the reaction N(6)-L-threonylcarbamoyladenosine(37) in tRNA + (sulfur carrier)-SH + AH2 + 2 S-adenosyl-L-methionine = 2-methylsulfanyl-N(6)-L-threonylcarbamoyladenosine(37) in tRNA + (sulfur carrier)-H + 5'-deoxyadenosine + L-methionine + A + S-adenosyl-L-homocysteine + 2 H(+). Catalyzes the methylthiolation of N6-threonylcarbamoyladenosine (t(6)A), leading to the formation of 2-methylthio-N6-threonylcarbamoyladenosine (ms(2)t(6)A) at position 37 in tRNAs that read codons beginning with adenine. This Homo sapiens (Human) protein is Threonylcarbamoyladenosine tRNA methylthiotransferase (CDKAL1).